Consider the following 127-residue polypeptide: UPF0325 protein VC_2264 (127 aa).

Belongs to the UPF0325 family.

This Vibrio cholerae serotype O1 (strain ATCC 39315 / El Tor Inaba N16961) protein is UPF0325 protein VC_2264.